The primary structure comprises 280 residues: Cobalt import ATP-binding protein CbiO (280 aa).

An ABC transporter domain is found at 2–236; sequence IEVRDLRFHY…GDWLRQQGLG (235 aa). 36–43 provides a ligand contact to ATP; the sequence is GANGCGKT.

Belongs to the ABC transporter superfamily. Cobalt importer (TC 3.A.1.18.1) family. Forms an energy-coupling factor (ECF) transporter complex composed of an ATP-binding protein (A component, CbiO), a transmembrane protein (T component, CbiQ) and 2 possible substrate-capture proteins (S components, CbiM and CbiN) of unknown stoichimetry.

Its subcellular location is the cell inner membrane. The protein operates within cofactor biosynthesis; adenosylcobalamin biosynthesis. Its function is as follows. Part of the energy-coupling factor (ECF) transporter complex CbiMNOQ involved in cobalt import. Presumably responsible for energy coupling to the transport system. In Syntrophus aciditrophicus (strain SB), this protein is Cobalt import ATP-binding protein CbiO.